Here is a 295-residue protein sequence, read N- to C-terminus: UDP-N-acetylenolpyruvoylglucosamine reductase (295 aa).

The FAD-binding PCMH-type domain occupies 23–188 (KVGGPADFLA…ISAKFALKPG (166 aa)). R167 is an active-site residue. The Proton donor role is filled by S217. Residue E287 is part of the active site.

Belongs to the MurB family. Requires FAD as cofactor.

The protein localises to the cytoplasm. The catalysed reaction is UDP-N-acetyl-alpha-D-muramate + NADP(+) = UDP-N-acetyl-3-O-(1-carboxyvinyl)-alpha-D-glucosamine + NADPH + H(+). Its pathway is cell wall biogenesis; peptidoglycan biosynthesis. Functionally, cell wall formation. This Streptococcus pyogenes serotype M49 (strain NZ131) protein is UDP-N-acetylenolpyruvoylglucosamine reductase.